The chain runs to 570 residues: Urease subunit alpha (570 aa).

The Urease domain maps to 131-570; that stretch reads GGMDSHIHFI…LPMAQRYFLF (440 aa). Residues H136, H138, and K219 each contribute to the Ni(2+) site. Residue K219 is modified to N6-carboxylysine. Residue H221 participates in substrate binding. Ni(2+) contacts are provided by H248 and H274. H322 serves as the catalytic Proton donor. D362 is a Ni(2+) binding site.

This sequence belongs to the metallo-dependent hydrolases superfamily. Urease alpha subunit family. In terms of assembly, heterotrimer of UreA (gamma), UreB (beta) and UreC (alpha) subunits. Three heterotrimers associate to form the active enzyme. Requires Ni cation as cofactor. Post-translationally, carboxylation allows a single lysine to coordinate two nickel ions.

Its subcellular location is the cytoplasm. The enzyme catalyses urea + 2 H2O + H(+) = hydrogencarbonate + 2 NH4(+). It functions in the pathway nitrogen metabolism; urea degradation; CO(2) and NH(3) from urea (urease route): step 1/1. This chain is Urease subunit alpha, found in Rhizobium johnstonii (strain DSM 114642 / LMG 32736 / 3841) (Rhizobium leguminosarum bv. viciae).